Reading from the N-terminus, the 57-residue chain is Large ribosomal subunit protein bL32 (57 aa).

This sequence belongs to the bacterial ribosomal protein bL32 family.

This Streptomyces griseus subsp. griseus (strain JCM 4626 / CBS 651.72 / NBRC 13350 / KCC S-0626 / ISP 5235) protein is Large ribosomal subunit protein bL32.